A 141-amino-acid chain; its full sequence is Hemoglobin subunit alpha (141 aa).

The Globin domain occupies Val-1–Arg-141. A Phosphoserine modification is found at Ser-3. Lys-7 bears the N6-succinyllysine mark. Thr-8 is modified (phosphothreonine). Lys-11 carries the post-translational modification N6-succinyllysine. At Lys-16 the chain carries N6-acetyllysine; alternate. Lys-16 is subject to N6-succinyllysine; alternate. Tyr-24 bears the Phosphotyrosine mark. Lys-40 carries the post-translational modification N6-succinyllysine. The residue at position 49 (Ser-49) is a Phosphoserine. An O2-binding site is contributed by His-58. His-87 lines the heme b pocket. A Phosphoserine modification is found at Ser-102. Residue Thr-108 is modified to Phosphothreonine. Ser-124 is modified (phosphoserine). Thr-134 and Thr-137 each carry phosphothreonine. Position 138 is a phosphoserine (Ser-138).

It belongs to the globin family. As to quaternary structure, heterotetramer of two alpha chains and two beta chains. As to expression, red blood cells.

In terms of biological role, involved in oxygen transport from the lung to the various peripheral tissues. Functionally, hemopressin acts as an antagonist peptide of the cannabinoid receptor CNR1. Hemopressin-binding efficiently blocks cannabinoid receptor CNR1 and subsequent signaling. This is Hemoglobin subunit alpha (HBA) from Phoca vitulina (Harbor seal).